A 349-amino-acid chain; its full sequence is Phosphate acyltransferase (349 aa).

It belongs to the PlsX family. Homodimer. Probably interacts with PlsY.

The protein localises to the cytoplasm. The enzyme catalyses a fatty acyl-[ACP] + phosphate = an acyl phosphate + holo-[ACP]. It participates in lipid metabolism; phospholipid metabolism. In terms of biological role, catalyzes the reversible formation of acyl-phosphate (acyl-PO(4)) from acyl-[acyl-carrier-protein] (acyl-ACP). This enzyme utilizes acyl-ACP as fatty acyl donor, but not acyl-CoA. The sequence is that of Phosphate acyltransferase from Colwellia psychrerythraea (strain 34H / ATCC BAA-681) (Vibrio psychroerythus).